The chain runs to 192 residues: Cytidylate kinase (192 aa).

ATP is bound at residue 12-20 (GLAGSGTTT).

The protein belongs to the cytidylate kinase family. Type 2 subfamily.

The protein resides in the cytoplasm. The catalysed reaction is CMP + ATP = CDP + ADP. It carries out the reaction dCMP + ATP = dCDP + ADP. The protein is Cytidylate kinase of Pyrococcus furiosus (strain ATCC 43587 / DSM 3638 / JCM 8422 / Vc1).